We begin with the raw amino-acid sequence, 478 residues long: Membrane-bound lytic murein transglycosylase F (478 aa).

The first 22 residues, 1-22 (MTRFLFAIILGFLLTACQQVTV), serve as a signal peptide directing secretion. Residues 23 to 257 (EETEYVPHKL…HLNEKYFGHV (235 aa)) are non-LT domain. The LT domain stretch occupies residues 258–478 (KRFDYIDTRA…PGTLSPDKPK (221 aa)). Glutamate 302 is a catalytic residue. The tract at residues 446–478 (SKQQNSDEEEPSDLASEDGPAPVPGTLSPDKPK) is disordered. The segment covering 451 to 461 (SDEEEPSDLAS) has biased composition (acidic residues).

In the N-terminal section; belongs to the bacterial solute-binding protein 3 family. This sequence in the C-terminal section; belongs to the transglycosylase Slt family.

Its subcellular location is the cell outer membrane. It catalyses the reaction Exolytic cleavage of the (1-&gt;4)-beta-glycosidic linkage between N-acetylmuramic acid (MurNAc) and N-acetylglucosamine (GlcNAc) residues in peptidoglycan, from either the reducing or the non-reducing ends of the peptidoglycan chains, with concomitant formation of a 1,6-anhydrobond in the MurNAc residue.. Murein-degrading enzyme that degrades murein glycan strands and insoluble, high-molecular weight murein sacculi, with the concomitant formation of a 1,6-anhydromuramoyl product. Lytic transglycosylases (LTs) play an integral role in the metabolism of the peptidoglycan (PG) sacculus. Their lytic action creates space within the PG sacculus to allow for its expansion as well as for the insertion of various structures such as secretion systems and flagella. The sequence is that of Membrane-bound lytic murein transglycosylase F from Shewanella sp. (strain MR-4).